Here is a 102-residue protein sequence, read N- to C-terminus: RxLR effector protein PexRD41 (102 aa).

Residues 1–21 (MRSIFYFALAFAALTCSNASA) form the signal peptide. Positions 39–53 (RSLRVAGQEAARGEE) match the RxLR-dEER motif.

The protein belongs to the RxLR effector family. Interacts with host KRBP1.

The protein localises to the secreted. It is found in the host cytoplasm. The protein resides in the host nucleus. It localises to the host nucleolus. Effector that enhances P.infestans colonization of host plant leaves. During the early stages of P.infestans infection, interacts with and stabilizes host potato K-homology (KH) RNA-binding protein KRBP1, leading to its accumulation. This is RxLR effector protein PexRD41 from Phytophthora infestans (strain T30-4) (Potato late blight agent).